We begin with the raw amino-acid sequence, 92 residues long: Acylphosphatase (92 aa).

The region spanning 5 to 92 is the Acylphosphatase-like domain; sequence YIVAYVYGVV…TPFETFSIRY (88 aa). Catalysis depends on residues Arg-20 and Asn-38.

Belongs to the acylphosphatase family.

The enzyme catalyses an acyl phosphate + H2O = a carboxylate + phosphate + H(+). The sequence is that of Acylphosphatase (acyP) from Yersinia pseudotuberculosis serotype O:1b (strain IP 31758).